The chain runs to 296 residues: ADP-forming sulfoacetate-CoA ligase subunit SqwL (296 aa).

Residues 17–20, lysine 43, and 96–98 each bind CoA; these read TGSE and IAD. Histidine 251 (tele-phosphohistidine intermediate) is an active-site residue.

The protein belongs to the succinate/malate CoA ligase alpha subunit family. Forms a complex with SqwK.

It catalyses the reaction sulfoacetate + ATP + CoA = sulfoacetyl-CoA + ADP + phosphate. Functionally, part of a variant of the sulfo-TK pathway, a D-sulfoquinovose degradation pathway that produces sulfoacetate. Hydrolyzes sulfoacetyl-coenzyme A (sulfoacetyl-CoA) to produce sulfoacetate and CoA coupled with the phosphorylation of ADP to generate ATP. Cannot use succinate, acetate or 3-hydroxypropionate, and shows only residual activities with malonate and 3-sulfopropanoate. The polypeptide is ADP-forming sulfoacetate-CoA ligase subunit SqwL (Acholeplasma sp).